A 564-amino-acid polypeptide reads, in one-letter code: H/ACA ribonucleoprotein complex non-core subunit NAF1 (564 aa).

Disordered regions lie at residues 1–29, 108–218, 238–264, 387–489, and 538–564; these read MESEQPAAVKASAPIEEPQSTETAVELGK, LVVQ…DSEG, DEDDEDFDEDGATGDRSRRRQPPKVRG, ASWE…HPSY, and PHMYPPPPPFAPPPPNNQSHQGQPPPS. The segment covering 146–157 has biased composition (low complexity); that stretch reads ASGLSLLAAYSS. A compositionally biased stretch (acidic residues) spans 238–249; that stretch reads DEDDEDFDEDGA. Thr-250 is modified (phosphothreonine). Ser-254 carries the phosphoserine modification. Positions 388-402 are enriched in basic and acidic residues; sequence SWEHDVEPPARYVDH. At Ser-403 the chain carries Phosphoserine. The span at 426–446 shows a compositional bias: low complexity; it reads STDSVDTVTSVATTATKASSV. The residue at position 427 (Thr-427) is a Phosphothreonine. Ser-429 carries the post-translational modification Phosphoserine. Thr-432 carries the post-translational modification Phosphothreonine. Residues 468 to 489 show a composition bias toward polar residues; that stretch reads PSINQHNQNQPQDEQYNFHPSY. Residues 538–553 show a composition bias toward pro residues; it reads PHMYPPPPPFAPPPPN. Positions 554-564 are enriched in polar residues; it reads NQSHQGQPPPS.

This sequence belongs to the NAF1 family. As to quaternary structure, during assembly of the complex, component of the box H/ACA small nucleolar ribonucleoprotein (H/ACA snoRNP) complex.

Its subcellular location is the nucleus. Its function is as follows. RNA-binding protein required for the maturation of the box H/ACA small nucleolar ribonucleoprotein (H/ACA snoRNP) complex and ribosome biogenesis. During assembly of the H/ACA snoRNP complex it associates with the complex and dissociates during complex maturation, becoming replaced by Gar1 to yield mature H/ACA snoRNP complex. This is H/ACA ribonucleoprotein complex non-core subunit NAF1 from Drosophila melanogaster (Fruit fly).